A 65-amino-acid polypeptide reads, in one-letter code: Beta-mammal toxin Tpa2 (65 aa).

Positions 2–64 (KEGYLVGNDG…TWSRATNRCG (63 aa)) constitute an LCN-type CS-alpha/beta domain. Cystine bridges form between Cys12-Cys63, Cys16-Cys38, Cys24-Cys44, and Cys28-Cys46.

As to expression, expressed by the venom gland.

The protein resides in the secreted. In terms of biological role, beta toxins bind voltage-independently at site-4 of sodium channels (Nav) and shift the voltage of activation toward more negative potentials thereby affecting sodium channel activation and promoting spontaneous and repetitive firing. This toxin is lethal to mice. In Tityus pachyurus (Colombian scorpion), this protein is Beta-mammal toxin Tpa2.